Reading from the N-terminus, the 93-residue chain is YcgL domain-containing protein KPK_1976 (93 aa).

Positions 1–85 (MFCVIYRSTK…PSENLLKKHL (85 aa)) constitute a YcgL domain.

The polypeptide is YcgL domain-containing protein KPK_1976 (Klebsiella pneumoniae (strain 342)).